The chain runs to 90 residues: Probable Fe(2+)-trafficking protein (90 aa).

The protein belongs to the Fe(2+)-trafficking protein family.

Functionally, could be a mediator in iron transactions between iron acquisition and iron-requiring processes, such as synthesis and/or repair of Fe-S clusters in biosynthetic enzymes. The sequence is that of Probable Fe(2+)-trafficking protein from Paracidovorax citrulli (strain AAC00-1) (Acidovorax citrulli).